A 169-amino-acid chain; its full sequence is Sec-independent protein translocase protein TatB (169 aa).

The helical transmembrane segment at 2–22 (SPGIGMPELLVVLVLALVVVG) threads the bilayer. Positions 106–169 (NQAETDADKA…AKPVDEIKGR (64 aa)) are disordered.

It belongs to the TatB family. In terms of assembly, the Tat system comprises two distinct complexes: a TatABC complex, containing multiple copies of TatA, TatB and TatC subunits, and a separate TatA complex, containing only TatA subunits. Substrates initially bind to the TatABC complex, which probably triggers association of the separate TatA complex to form the active translocon.

It localises to the cell inner membrane. Functionally, part of the twin-arginine translocation (Tat) system that transports large folded proteins containing a characteristic twin-arginine motif in their signal peptide across membranes. Together with TatC, TatB is part of a receptor directly interacting with Tat signal peptides. TatB may form an oligomeric binding site that transiently accommodates folded Tat precursor proteins before their translocation. The polypeptide is Sec-independent protein translocase protein TatB (Maricaulis maris (strain MCS10) (Caulobacter maris)).